The following is a 184-amino-acid chain: uncharacterized protein (184 aa).

This is an uncharacterized protein from Chlamydia pneumoniae (Chlamydophila pneumoniae).